Reading from the N-terminus, the 192-residue chain is MNLPIKSNAASKEKLLTLLALKAYKNGNFTLSSGNKSNHYVNCKPVSLSGNGLLLLSNMMLENVEPDSLAVAGLTLGADPLVCGVALAATYAGRKLDALIVRKEPKGYGTASWLEGPLPPAGSVITVLEDVVTTGRSSLKAVNQLQNAGYRVNRIISIVDRQEGGAFEIKKAGLDLVSLFVLDEVYEKFKNT.

5-phospho-alpha-D-ribose 1-diphosphate-binding positions include R102, K103, K106, and 129–137; that span reads EDVVTTGRS. Orotate is bound by residues T133 and R161.

This sequence belongs to the purine/pyrimidine phosphoribosyltransferase family. PyrE subfamily. Homodimer. It depends on Mg(2+) as a cofactor.

It carries out the reaction orotidine 5'-phosphate + diphosphate = orotate + 5-phospho-alpha-D-ribose 1-diphosphate. The protein operates within pyrimidine metabolism; UMP biosynthesis via de novo pathway; UMP from orotate: step 1/2. Catalyzes the transfer of a ribosyl phosphate group from 5-phosphoribose 1-diphosphate to orotate, leading to the formation of orotidine monophosphate (OMP). This is Orotate phosphoribosyltransferase from Prochlorococcus marinus (strain SARG / CCMP1375 / SS120).